We begin with the raw amino-acid sequence, 362 residues long: Porin Omp2b (362 aa).

The signal sequence occupies residues 1–22; the sequence is MNIKSLLLGSAAALVAASGAQA.

The protein belongs to the alphaproteobacteria porin family. As to quaternary structure, homotrimer.

The protein resides in the cell outer membrane. Functionally, forms passive diffusion pores that allow small molecular weight hydrophilic materials across the outer membrane. This is Porin Omp2b (omp2b) from Brucella melitensis biotype 1 (strain ATCC 23456 / CCUG 17765 / NCTC 10094 / 16M).